The chain runs to 652 residues: MYLGSWLNRLGRGLSRPIGKTKQPIWGSLSRSLTLSSQRVPEFSSFVARTNTCGELRSSHLGQEVTLCGWIQYRRQNTFLVLRDCHGLVQILIPQDESAASVRRTLCEAPVESVVRVSGTVIARPLGQENPKMPTGEIEIKAKTAELLNACKKLPFEIKDFVKKTEALRLQYRYLDLRSSQMQHNLRLRSQMVMKMREYLCTLHGFVDIETPTLFKRTPGGAKEFLVPSREPGRFYSLPQSPQQFKQLLMVGGLDRYFQVARCYRDEGSRPDRQPEFTQIDIEMSFVDQTGIQHLVEGLLHYSWPEDKDPLVAPFPSMTFAEALATYGTDKPDTRFGMKIVDISDVFRNTEIRFLQDALAKPQGTVKAICVHEGAKYLRKEDIEFIRKFAAHHFSQEVLPIFLNARKNWSSPFAKFITEEERLELTRLMEIQEDDMVLLTAGQHEKACSLLGKLRLECADLLETRGLALRDPALFSFLWVLDFPLFLAKEESPTELESAHHPFTAPHPGDIHLLYTEPEKVRGQHYDLVLNGNEIGGGSIRIHDAQLQRYILETLLKEDVKLLSHLLQALDYGAPPHGGIALGLDRLVCLVTGAPSIRDVIAFPKSYRGHDLMSNAPDTVSPEDLKPYHIHVSWPTDSEERASATPSKYLSS.

A mitochondrion-targeting transit peptide spans 1 to 46 (MYLGSWLNRLGRGLSRPIGKTKQPIWGSLSRSLTLSSQRVPEFSSF). Thr218 is subject to Phosphothreonine. Ser241 carries the post-translational modification Phosphoserine. An aspartate region spans residues 243-246 (QQFK). L-aspartate is bound at residue Arg265. Residues 265-267 (RDE) and Glu534 contribute to the ATP site. Residue Arg541 coordinates L-aspartate. 583–586 (GLDR) serves as a coordination point for ATP.

This sequence belongs to the class-II aminoacyl-tRNA synthetase family. Type 1 subfamily. Homodimer.

It is found in the mitochondrion matrix. It localises to the mitochondrion membrane. It catalyses the reaction tRNA(Asp) + L-aspartate + ATP = L-aspartyl-tRNA(Asp) + AMP + diphosphate. Its function is as follows. Catalyzes the attachment of aspartate to tRNA(Asp) in a two-step reaction: aspartate is first activated by ATP to form Asp-AMP and then transferred to the acceptor end of tRNA(Asp). This Rattus norvegicus (Rat) protein is Aspartate--tRNA ligase, mitochondrial (Dars2).